The sequence spans 356 residues: L-amino acid-D/L-Glu epimerase (356 aa).

Substrate-binding positions include Arg25, Ser136, and Lys161–Lys163. Asp191 is a Mg(2+) binding site. Residue Asn193 participates in substrate binding. Mg(2+) contacts are provided by Glu219 and Asp244. Substrate contacts are provided by residues Lys268, Cys296–Met298, and Asp320–Asp322.

It belongs to the mandelate racemase/muconate lactonizing enzyme family. Requires Mg(2+) as cofactor.

Functionally, catalyzes the epimerization of dipeptides with L-Glu in the second position. Has epimerase activity with L-Ala-L-Glu, L-Pro-L-Glu, L-Val-L-Glu, L-Thr-L-Glu and L-Met-L-Glu (in vitro). The protein is L-amino acid-D/L-Glu epimerase of Francisella philomiragia subsp. philomiragia (strain ATCC 25017 / CCUG 19701 / FSC 153 / O#319-036).